The chain runs to 591 residues: V-type ATP synthase alpha chain (591 aa).

Residue 233–240 (GPFGAGKT) participates in ATP binding.

This sequence belongs to the ATPase alpha/beta chains family.

It catalyses the reaction ATP + H2O + 4 H(+)(in) = ADP + phosphate + 5 H(+)(out). In terms of biological role, produces ATP from ADP in the presence of a proton gradient across the membrane. The V-type alpha chain is a catalytic subunit. The chain is V-type ATP synthase alpha chain from Streptococcus pyogenes serotype M5 (strain Manfredo).